Consider the following 197-residue polypeptide: Holliday junction branch migration complex subunit RuvA (197 aa).

The interval 1 to 64 (MIDSIVGTIQ…LSELECYGFL (64 aa)) is domain I. Positions 65–143 (TREERELFLK…KEFKVASTSG (79 aa)) are domain II. The interval 144–152 (TEEKTYEKL) is flexible linker. Positions 152 to 197 (LEEISLALLSLGYEIDEINQVLSSEDFSELSLEDGIKLALKKLSKI) are domain III.

This sequence belongs to the RuvA family. In terms of assembly, homotetramer. Forms an RuvA(8)-RuvB(12)-Holliday junction (HJ) complex. HJ DNA is sandwiched between 2 RuvA tetramers; dsDNA enters through RuvA and exits via RuvB. An RuvB hexamer assembles on each DNA strand where it exits the tetramer. Each RuvB hexamer is contacted by two RuvA subunits (via domain III) on 2 adjacent RuvB subunits; this complex drives branch migration. In the full resolvosome a probable DNA-RuvA(4)-RuvB(12)-RuvC(2) complex forms which resolves the HJ.

The protein resides in the cytoplasm. Its function is as follows. The RuvA-RuvB-RuvC complex processes Holliday junction (HJ) DNA during genetic recombination and DNA repair, while the RuvA-RuvB complex plays an important role in the rescue of blocked DNA replication forks via replication fork reversal (RFR). RuvA specifically binds to HJ cruciform DNA, conferring on it an open structure. The RuvB hexamer acts as an ATP-dependent pump, pulling dsDNA into and through the RuvAB complex. HJ branch migration allows RuvC to scan DNA until it finds its consensus sequence, where it cleaves and resolves the cruciform DNA. This is Holliday junction branch migration complex subunit RuvA from Caldicellulosiruptor saccharolyticus (strain ATCC 43494 / DSM 8903 / Tp8T 6331).